A 467-amino-acid polypeptide reads, in one-letter code: MSPYLAAEDLSMFGTDPWWLVVIKAVFCFAFLMVTVLFSIVWERKVVAWMQLRIGPNRHGPWGMLQSLADGIKLMLKEDVIVKRADKAVYVLAPIVAAIPAFMAIAVIPFGPAGNEVSIFGHRTAMQLTDLPIAMLFILAVASVGIYGIVLAGWSSGSTYPLLGGLRSCAQMISYEIAMGAAFASVFLYSGSMSTSEIVAQQDDRWYIVLLPVSFILYIVTMVGETNRAPFDMPESEGDLVGGFNTEYSSIKFAMFMLAEYVNMVTVSAVATTLFLGGWRAPWPISTFWEGANHGWWPLLWFVVKVQLLLFFFIWLRGTLPRVRYDQLMKLGWKVLIPVSLVWLMLVATVRALRNENYGFSDIALYIGGGVLVLLLLSFLVDMYRDKGGKAADQPAETGTGTGTGTETAFDPMAGGFPVPPMPGQQVPPVPRRRPRRERELIVSGGPDTHSDGPAGGPTDGKEASDG.

A run of 9 helical transmembrane segments spans residues 18-38 (WWLV…TVLF), 88-108 (AVYV…IAVI), 131-151 (LPIA…GIVL), 172-192 (MISY…YSGS), 206-226 (WYIV…VGET), 256-276 (FMLA…TLFL), 296-316 (WWPL…FIWL), 328-348 (LMKL…MLVA), and 363-383 (IALY…LVDM). A disordered region spans residues 389–467 (GKAADQPAET…PTDGKEASDG (79 aa)). Positions 418–430 (PVPPMPGQQVPPV) are enriched in pro residues.

This sequence belongs to the complex I subunit 1 family. In terms of assembly, NDH-1 is composed of 14 different subunits. Subunits NuoA, H, J, K, L, M, N constitute the membrane sector of the complex.

Its subcellular location is the cell membrane. The enzyme catalyses a quinone + NADH + 5 H(+)(in) = a quinol + NAD(+) + 4 H(+)(out). Functionally, NDH-1 shuttles electrons from NADH, via FMN and iron-sulfur (Fe-S) centers, to quinones in the respiratory chain. The immediate electron acceptor for the enzyme in this species is believed to be ubiquinone. Couples the redox reaction to proton translocation (for every two electrons transferred, four hydrogen ions are translocated across the cytoplasmic membrane), and thus conserves the redox energy in a proton gradient. This subunit may bind ubiquinone. The polypeptide is NADH-quinone oxidoreductase subunit H (Streptomyces coelicolor (strain ATCC BAA-471 / A3(2) / M145)).